The sequence spans 206 residues: Nucleoside triphosphate pyrophosphatase (206 aa).

Catalysis depends on aspartate 71, which acts as the Proton acceptor.

It belongs to the Maf family. The cofactor is a divalent metal cation.

The protein resides in the cytoplasm. It catalyses the reaction a ribonucleoside 5'-triphosphate + H2O = a ribonucleoside 5'-phosphate + diphosphate + H(+). The enzyme catalyses a 2'-deoxyribonucleoside 5'-triphosphate + H2O = a 2'-deoxyribonucleoside 5'-phosphate + diphosphate + H(+). In terms of biological role, nucleoside triphosphate pyrophosphatase. May have a dual role in cell division arrest and in preventing the incorporation of modified nucleotides into cellular nucleic acids. This is Nucleoside triphosphate pyrophosphatase from Rippkaea orientalis (strain PCC 8801 / RF-1) (Cyanothece sp. (strain PCC 8801)).